The sequence spans 431 residues: Serine--tRNA ligase (431 aa).

238–240 lines the L-serine pocket; it reads TAE. 269 to 271 is an ATP binding site; it reads RSE. Residue E292 participates in L-serine binding. ATP is bound at residue 356–359; that stretch reads EISS. S391 is an L-serine binding site.

It belongs to the class-II aminoacyl-tRNA synthetase family. Type-1 seryl-tRNA synthetase subfamily. In terms of assembly, homodimer. The tRNA molecule binds across the dimer.

The protein resides in the cytoplasm. It catalyses the reaction tRNA(Ser) + L-serine + ATP = L-seryl-tRNA(Ser) + AMP + diphosphate + H(+). The enzyme catalyses tRNA(Sec) + L-serine + ATP = L-seryl-tRNA(Sec) + AMP + diphosphate + H(+). It functions in the pathway aminoacyl-tRNA biosynthesis; selenocysteinyl-tRNA(Sec) biosynthesis; L-seryl-tRNA(Sec) from L-serine and tRNA(Sec): step 1/1. Functionally, catalyzes the attachment of serine to tRNA(Ser). Is also able to aminoacylate tRNA(Sec) with serine, to form the misacylated tRNA L-seryl-tRNA(Sec), which will be further converted into selenocysteinyl-tRNA(Sec). The polypeptide is Serine--tRNA ligase (Bdellovibrio bacteriovorus (strain ATCC 15356 / DSM 50701 / NCIMB 9529 / HD100)).